The following is a 223-amino-acid chain: Immediate early response gene 2 protein (223 aa).

N-acetylmethionine is present on Met1. Residues 63–172 (AALPSDPRLH…PPAQAEGAFP (110 aa)) are disordered. Over residues 69 to 78 (PRLHPPREAE) the composition is skewed to basic and acidic residues. Low complexity predominate over residues 125–138 (SSLSDGGDAGLVPS).

Belongs to the IER family. Expressed in activated T-cells (at protein level). Expression increases in metastatic tumor cells (at protein level).

It localises to the cytoplasm. The protein localises to the nucleus. DNA-binding protein that seems to act as a transcription factor. Involved in the regulation of neuronal differentiation, acts upon JNK-signaling pathway activation and plays a role in neurite outgrowth in hippocampal cells. May mediate with FIBP FGF-signaling in the establishment of laterality in the embryo. Promotes cell motility, seems to stimulate tumor metastasis. The polypeptide is Immediate early response gene 2 protein (Homo sapiens (Human)).